A 525-amino-acid chain; its full sequence is D-arabinono-1,4-lactone oxidase (525 aa).

Residues 23–197 (YSCRPQLYFQ…VKATIRVIPE (175 aa)) enclose the FAD-binding PCMH-type domain. Histidine 60 is modified (pros-8alpha-FAD histidine).

Belongs to the oxygen-dependent FAD-linked oxidoreductase family. It depends on FAD as a cofactor.

Its subcellular location is the mitochondrion membrane. It carries out the reaction D-arabinono-1,4-lactone + O2 = dehydro-D-arabinono-1,4-lactone + H2O2 + H(+). It participates in cofactor biosynthesis; D-erythroascorbate biosynthesis; dehydro-D-arabinono-1,4-lactone from D-arabinose: step 2/2. The chain is D-arabinono-1,4-lactone oxidase (ALO1) from Kluyveromyces lactis (strain ATCC 8585 / CBS 2359 / DSM 70799 / NBRC 1267 / NRRL Y-1140 / WM37) (Yeast).